The primary structure comprises 607 residues: Glutamine--fructose-6-phosphate aminotransferase [isomerizing] (607 aa).

Cys-2 (nucleophile; for GATase activity) is an active-site residue. In terms of domain architecture, Glutamine amidotransferase type-2 spans 2-217; that stretch reads CGIIGIIGND…DGDWAVLTRN (216 aa). SIS domains lie at 283–422 and 455–597; these read IGID…ARGA and VCHD…VDQP. Catalysis depends on Lys-602, which acts as the For Fru-6P isomerization activity.

As to quaternary structure, homodimer.

The protein resides in the cytoplasm. It carries out the reaction D-fructose 6-phosphate + L-glutamine = D-glucosamine 6-phosphate + L-glutamate. In terms of biological role, catalyzes the first step in hexosamine metabolism, converting fructose-6P into glucosamine-6P using glutamine as a nitrogen source. This chain is Glutamine--fructose-6-phosphate aminotransferase [isomerizing], found in Brucella melitensis biotype 1 (strain ATCC 23456 / CCUG 17765 / NCTC 10094 / 16M).